We begin with the raw amino-acid sequence, 81 residues long: MATLRIRLQVPKKYRDQPLMGDVLASCQLQFNILAAHLGPNREEDGWFDVMLTGTSEDITAALAVLRDRDIELWSDTEDEF.

The protein to Synechocystis PCC 6803 ssr2439.

May have a regulatory function. This is an uncharacterized protein from Synechococcus elongatus (strain ATCC 33912 / PCC 7942 / FACHB-805) (Anacystis nidulans R2).